We begin with the raw amino-acid sequence, 459 residues long: Ceramide glucosyltransferase 3 (459 aa).

The chain crosses the membrane as a helical span at residues 77 to 97 (LIAIVGFVFVFCLYLIHIIAL). Position 156 (D156) is a short sequence motif, D1. A short sequence motif (D2) is located at residue D208. Position 302 (D302) is a short sequence motif, D3. D302 acts as the Proton acceptor in catalysis. A (Q/R)XXRW motif is present at residues 338–342 (RICRW). A run of 2 helical transmembrane segments spans residues 367-387 (LIMAFSLNHLVGLNIMPILIL) and 415-435 (FMLIWLLRELTAPFVFIKALL).

It belongs to the glycosyltransferase 2 family. Expressed in pharyngeal intestinal valve, intestinal rectal valve and hypodermis.

The protein resides in the membrane. It carries out the reaction an N-acylsphing-4-enine + UDP-alpha-D-glucose = a beta-D-glucosyl-(1&lt;-&gt;1')-N-acylsphing-4-enine + UDP + H(+). The catalysed reaction is an N-acyl-15-methylhexadecasphing-4-enine + UDP-alpha-D-glucose = an N-acyl-1-beta-D-glucosyl-15-methylhexadecasphing-4-enine + UDP + H(+). The protein operates within lipid metabolism; sphingolipid metabolism. Its function is as follows. Catalyzes the first glycosylation step in glycosphingolipid biosynthesis, the transfer of glucose to ceramide to produce glucosylceramides (GlcCer). GlcCer are known to contribute to the physical properties and physiological functions of membranes and may regulate signal transduction. Seems to be the major active form in the nematode. Only branched-chain sphingoid bases like 15-methylhexadecasphing-4-enine are used for generating complex sphingolipids in Caenorhabditis elegans. Together with cgt-1, plays a role in the trafficking of proteins such as mig-14 to the cell membrane in intestinal cells. The protein is Ceramide glucosyltransferase 3 of Caenorhabditis elegans.